The chain runs to 262 residues: UPF0758 protein R01728 (262 aa).

Residues 23 to 44 (PEKRTRNSPATAPAPATDTHYH) are disordered. Residues 31–40 (PATAPAPATD) show a composition bias toward low complexity. The 123-residue stretch at 140–262 (VLSSWSAVID…HVSLKGLRLF (123 aa)) folds into the MPN domain. Residues histidine 211, histidine 213, and aspartate 224 each coordinate Zn(2+). Positions 211 to 224 (HNHPSGDPTPSRAD) match the JAMM motif motif.

This sequence belongs to the UPF0758 family.

The polypeptide is UPF0758 protein R01728 (Rhizobium meliloti (strain 1021) (Ensifer meliloti)).